We begin with the raw amino-acid sequence, 80 residues long: Ubiquinol-cytochrome c reductase complex assembly factor 5 (80 aa).

The Mitochondrial matrix segment spans residues 1 to 19; the sequence is MFSRAQVRRALQRVPGKQR. Residues 20–41 traverse the membrane as a helical segment; sequence FGIYRFLPFFFVLGGAMEWIMI. The Mitochondrial intermembrane segment spans residues 42 to 80; that stretch reads KVRVGQETFYDVYRRKASERQYQRRLEDTSETNLHKLIK.

The protein belongs to the UQCC5 family. In terms of assembly, associates with the mitochondrial ribosome. Interacts with UQCC6. Interacts with MT-CYB; interacts with newly synthesizes MT-CYB. Forms a complex, named COMB/coordinator of mitochondrial CYTB biogenesis, composed of UQCC1, UQCC2, UQCC4, UQCC5 and UQCC6; stabilizes nascent cytochrome b/MT-CYB and promotes its membrane insertion.

It is found in the mitochondrion inner membrane. Functionally, required for the assembly and stability of the mitochondrial ubiquinol-cytochrome c reductase complex (complex III (CIII) or cytochrome b-c1 complex), a multisubunit transmembrane complex that is part of the mitochondrial electron transport chain (ETC) which drives oxidative phosphorylation. Mediates early complex III biogenesis. Participates in regulating the levels of electron transport chain proteins, and therefore energy supply, in response to changes in energy demand. Also required for cytochrome c oxidase complex (complex IV) assembly. The chain is Ubiquinol-cytochrome c reductase complex assembly factor 5 from Mus musculus (Mouse).